The sequence spans 188 residues: V-type proton ATPase subunit E (188 aa).

Belongs to the V-ATPase E subunit family.

Its function is as follows. Produces ATP from ADP in the presence of a proton gradient across the membrane. This Dictyoglomus turgidum (strain DSM 6724 / Z-1310) protein is V-type proton ATPase subunit E.